Consider the following 454-residue polypeptide: Exodeoxyribonuclease 7 large subunit (454 aa).

Residues 337 to 352 (ANQRQQRASQRLRQQN) show a composition bias toward low complexity. Positions 337 to 359 (ANQRQQRASQRLRQQNPQPRIHR) are disordered.

The protein belongs to the XseA family. In terms of assembly, heterooligomer composed of large and small subunits.

It localises to the cytoplasm. The enzyme catalyses Exonucleolytic cleavage in either 5'- to 3'- or 3'- to 5'-direction to yield nucleoside 5'-phosphates.. Bidirectionally degrades single-stranded DNA into large acid-insoluble oligonucleotides, which are then degraded further into small acid-soluble oligonucleotides. In Salmonella arizonae (strain ATCC BAA-731 / CDC346-86 / RSK2980), this protein is Exodeoxyribonuclease 7 large subunit.